Reading from the N-terminus, the 442-residue chain is 3-isopropylmalate dehydratase large subunit (442 aa).

3 residues coordinate [4Fe-4S] cluster: Xaa347, Cys407, and Cys410.

Belongs to the aconitase/IPM isomerase family. LeuC type 1 subfamily. In terms of assembly, heterodimer of LeuC and LeuD. It depends on [4Fe-4S] cluster as a cofactor.

It catalyses the reaction (2R,3S)-3-isopropylmalate = (2S)-2-isopropylmalate. It participates in amino-acid biosynthesis; L-leucine biosynthesis; L-leucine from 3-methyl-2-oxobutanoate: step 2/4. In terms of biological role, catalyzes the isomerization between 2-isopropylmalate and 3-isopropylmalate, via the formation of 2-isopropylmaleate. In Buchnera aphidicola subsp. Macrosiphoniella ludovicianae, this protein is 3-isopropylmalate dehydratase large subunit.